A 166-amino-acid chain; its full sequence is FMN reductase (NADH) RutF (166 aa).

The protein belongs to the non-flavoprotein flavin reductase family. RutF subfamily.

It carries out the reaction FMNH2 + NAD(+) = FMN + NADH + 2 H(+). Catalyzes the reduction of FMN to FMNH2 which is used to reduce pyrimidine by RutA via the Rut pathway. The polypeptide is FMN reductase (NADH) RutF (Cronobacter sakazakii (strain ATCC BAA-894) (Enterobacter sakazakii)).